A 434-amino-acid polypeptide reads, in one-letter code: Glutamyl-tRNA reductase (434 aa).

Residues 49 to 52 (TCNR), serine 109, 114 to 116 (EPQ), and glutamine 120 each bind substrate. The Nucleophile role is filled by cysteine 50. 189–194 (GAGEMA) is a binding site for NADP(+).

The protein belongs to the glutamyl-tRNA reductase family. As to quaternary structure, homodimer.

The catalysed reaction is (S)-4-amino-5-oxopentanoate + tRNA(Glu) + NADP(+) = L-glutamyl-tRNA(Glu) + NADPH + H(+). Its pathway is porphyrin-containing compound metabolism; protoporphyrin-IX biosynthesis; 5-aminolevulinate from L-glutamyl-tRNA(Glu): step 1/2. Catalyzes the NADPH-dependent reduction of glutamyl-tRNA(Glu) to glutamate 1-semialdehyde (GSA). The sequence is that of Glutamyl-tRNA reductase from Desulfatibacillum aliphaticivorans.